The primary structure comprises 72 residues: Gene 42 protein (72 aa).

The chain is Gene 42 protein (42) from Mycobacterium phage L5 (Mycobacteriophage L5).